The sequence spans 362 residues: MNPSLIRKLEGLIERHEEVQAMLGEPGVASDQDRYRALTREYAQLEDIVHAFQRFRQAEENLEATKLMLEEDDADLREMAQEELPLAKSTLEEQEQALQVMLLPRDPKDDNNCYLEIRAGAGGDEAAIFAGDLFRMYSRYAERQGWRISIVSCNDGEHGGYKEVIAKVDGEHVYGRLKFESGGHRVQRVPETESQGRVHTSACTVAVLPEVPEAEQIEINANDLKIDTFRASGAGGQHVNKTDSAIRITHLPTGLVVECQDERSQHKNRAKAMSVLSARLQAAEDERHRAAEQSTRRNLVGSGDRSERIRTYNYPQGRLSEHRINLTLYRLGEIMEGDLDCIISPMIQEYQADQLASLAENS.

Gln-237 bears the N5-methylglutamine mark.

This sequence belongs to the prokaryotic/mitochondrial release factor family. Post-translationally, methylated by PrmC. Methylation increases the termination efficiency of RF1.

It localises to the cytoplasm. Its function is as follows. Peptide chain release factor 1 directs the termination of translation in response to the peptide chain termination codons UAG and UAA. The sequence is that of Peptide chain release factor 1 from Aeromonas salmonicida (strain A449).